The primary structure comprises 274 residues: Rhamnulose-1-phosphate aldolase (274 aa).

Glu117 is an active-site residue. Zn(2+)-binding residues include His141, His143, and His212.

Belongs to the aldolase class II family. RhaD subfamily. Homotetramer. It depends on Zn(2+) as a cofactor.

Its subcellular location is the cytoplasm. It catalyses the reaction L-rhamnulose 1-phosphate = (S)-lactaldehyde + dihydroxyacetone phosphate. It participates in carbohydrate degradation; L-rhamnose degradation; glycerone phosphate from L-rhamnose: step 3/3. Functionally, catalyzes the reversible cleavage of L-rhamnulose-1-phosphate to dihydroxyacetone phosphate (DHAP) and L-lactaldehyde. The sequence is that of Rhamnulose-1-phosphate aldolase from Yersinia pseudotuberculosis serotype IB (strain PB1/+).